The primary structure comprises 379 residues: MSAIRYELIKTDKQTGARLGKIHTPHGTFDTPMFMPVGTLATVKTMSPEELKAMGAGIILSNTYHLWLRPGEELIREAGGLHKFMNWDQPILTDSGGFQVFSLSKMRDIKEEGVHFRNHLNGDKLFLSPEKAIQIQNALGSDIMMSFDECPPYPASHEYMKKSVERTSRWAERGLKAHVRPEDQGLFGIVQGGAYEDLRAQSAKDLVSLDFPGYSIGGLSVGEPKDVMNRVLEHTTPLLPANKPRYLMGVGSPDSLIDGVIRGVDMFDCVLPTRIARNGTCMTSSGRLVIKNAKFTHDFRPIDENCDCYTCKNYSRAYIRHLIRCEETFGIRLTTYHNLHFLLNLMKQVRGAIMEDRLADFREEFFEQYGFNRPDAKNF.

Asp-94 acts as the Proton acceptor in catalysis. Substrate-binding positions include 94-98 (DSGGF), Asp-148, Gln-191, and Gly-218. The interval 249 to 255 (GVGSPDS) is RNA binding. Asp-268 (nucleophile) is an active-site residue. Residues 273 to 277 (TRIAR) are RNA binding; important for wobble base 34 recognition. Cys-306, Cys-308, Cys-311, and His-337 together coordinate Zn(2+).

The protein belongs to the queuine tRNA-ribosyltransferase family. As to quaternary structure, homodimer. Within each dimer, one monomer is responsible for RNA recognition and catalysis, while the other monomer binds to the replacement base PreQ1. Zn(2+) serves as cofactor.

It carries out the reaction 7-aminomethyl-7-carbaguanine + guanosine(34) in tRNA = 7-aminomethyl-7-carbaguanosine(34) in tRNA + guanine. The protein operates within tRNA modification; tRNA-queuosine biosynthesis. Its function is as follows. Catalyzes the base-exchange of a guanine (G) residue with the queuine precursor 7-aminomethyl-7-deazaguanine (PreQ1) at position 34 (anticodon wobble position) in tRNAs with GU(N) anticodons (tRNA-Asp, -Asn, -His and -Tyr). Catalysis occurs through a double-displacement mechanism. The nucleophile active site attacks the C1' of nucleotide 34 to detach the guanine base from the RNA, forming a covalent enzyme-RNA intermediate. The proton acceptor active site deprotonates the incoming PreQ1, allowing a nucleophilic attack on the C1' of the ribose to form the product. After dissociation, two additional enzymatic reactions on the tRNA convert PreQ1 to queuine (Q), resulting in the hypermodified nucleoside queuosine (7-(((4,5-cis-dihydroxy-2-cyclopenten-1-yl)amino)methyl)-7-deazaguanosine). This Listeria monocytogenes serovar 1/2a (strain ATCC BAA-679 / EGD-e) protein is Queuine tRNA-ribosyltransferase.